A 108-amino-acid polypeptide reads, in one-letter code: Phosphoribosyl-ATP pyrophosphatase (108 aa).

The segment at 88–108 (VENELDRREGRSGIEEKASRK) is disordered. The span at 91-108 (ELDRREGRSGIEEKASRK) shows a compositional bias: basic and acidic residues.

It belongs to the PRA-PH family.

The protein localises to the cytoplasm. The catalysed reaction is 1-(5-phospho-beta-D-ribosyl)-ATP + H2O = 1-(5-phospho-beta-D-ribosyl)-5'-AMP + diphosphate + H(+). The protein operates within amino-acid biosynthesis; L-histidine biosynthesis; L-histidine from 5-phospho-alpha-D-ribose 1-diphosphate: step 2/9. The sequence is that of Phosphoribosyl-ATP pyrophosphatase from Paracoccus denitrificans (strain Pd 1222).